Reading from the N-terminus, the 157-residue chain is Transcription elongation factor GreA (157 aa).

Residues 14–37 (LRKELERLLKRRPLITEAIAEARE) adopt a coiled-coil conformation.

It belongs to the GreA/GreB family.

Functionally, necessary for efficient RNA polymerase transcription elongation past template-encoded arresting sites. The arresting sites in DNA have the property of trapping a certain fraction of elongating RNA polymerases that pass through, resulting in locked ternary complexes. Cleavage of the nascent transcript by cleavage factors such as GreA or GreB allows the resumption of elongation from the new 3'terminus. GreA releases sequences of 2 to 3 nucleotides. The chain is Transcription elongation factor GreA from Vibrio vulnificus (strain CMCP6).